We begin with the raw amino-acid sequence, 315 residues long: GTP cyclohydrolase MptA (315 aa).

Belongs to the GTP cyclohydrolase IV family. Homodimer. Fe(2+) serves as cofactor.

The catalysed reaction is GTP + H2O = 7,8-dihydroneopterin 2',3'-cyclic phosphate + formate + diphosphate + H(+). It functions in the pathway cofactor biosynthesis; 5,6,7,8-tetrahydromethanopterin biosynthesis. Converts GTP to 7,8-dihydro-D-neopterin 2',3'-cyclic phosphate, the first intermediate in the biosynthesis of coenzyme methanopterin. This Methanococcus maripaludis (strain C6 / ATCC BAA-1332) protein is GTP cyclohydrolase MptA.